Consider the following 128-residue polypeptide: Probable 4-amino-4-deoxy-L-arabinose-phosphoundecaprenol flippase subunit ArnF (128 aa).

Residues 1 to 2 (MG) are Cytoplasmic-facing. The chain crosses the membrane as a helical span at residues 3–23 (LMWGLFSVIIASAAQLSMGFA). The Periplasmic segment spans residues 24–35 (ASHLPPMTHLWD). A helical transmembrane segment spans residues 36 to 56 (FIAALLAFGLDARILLLGLLG). The Cytoplasmic portion of the chain corresponds to 57–76 (YLLSVFCWYKTLHKLALSKA). The helical transmembrane segment at 77 to 97 (YALLSMSYVLVWIASMVLPGW) threads the bilayer. The Periplasmic portion of the chain corresponds to 98–100 (EGT). A helical transmembrane segment spans residues 101 to 121 (FSLKALLGVACIMSGLMLIFL). Residues 122–128 (PTTKQRY) lie on the Cytoplasmic side of the membrane.

This sequence belongs to the ArnF family. As to quaternary structure, heterodimer of ArnE and ArnF.

It is found in the cell inner membrane. The protein operates within bacterial outer membrane biogenesis; lipopolysaccharide biosynthesis. In terms of biological role, translocates 4-amino-4-deoxy-L-arabinose-phosphoundecaprenol (alpha-L-Ara4N-phosphoundecaprenol) from the cytoplasmic to the periplasmic side of the inner membrane. In Escherichia coli O45:K1 (strain S88 / ExPEC), this protein is Probable 4-amino-4-deoxy-L-arabinose-phosphoundecaprenol flippase subunit ArnF.